The following is a 537-amino-acid chain: Phosphoenolpyruvate carboxykinase (ATP) (537 aa).

Substrate-binding residues include Arg-61, Tyr-194, and Lys-200. Residues Lys-200, His-219, and Gly-235 to Thr-243 contribute to the ATP site. Mn(2+) contacts are provided by Lys-200 and His-219. Asp-256 serves as a coordination point for Mn(2+). ATP contacts are provided by Glu-284, Arg-322, and Thr-448. Arg-322 provides a ligand contact to substrate.

The protein belongs to the phosphoenolpyruvate carboxykinase (ATP) family. Requires Mn(2+) as cofactor.

The protein resides in the cytoplasm. It carries out the reaction oxaloacetate + ATP = phosphoenolpyruvate + ADP + CO2. Its pathway is carbohydrate biosynthesis; gluconeogenesis. Functionally, involved in the gluconeogenesis. Catalyzes the conversion of oxaloacetate (OAA) to phosphoenolpyruvate (PEP) through direct phosphoryl transfer between the nucleoside triphosphate and OAA. In Bradyrhizobium sp. (strain BTAi1 / ATCC BAA-1182), this protein is Phosphoenolpyruvate carboxykinase (ATP).